The following is a 283-amino-acid chain: Thymidylate synthase (283 aa).

Arg-22 serves as a coordination point for dUMP. Cys-160 (nucleophile) is an active-site residue. DUMP contacts are provided by residues 180-183 (RSCD), Asn-191, and 221-223 (HIY). Residue Asp-183 participates in (6R)-5,10-methylene-5,6,7,8-tetrahydrofolate binding. Ser-282 contributes to the (6R)-5,10-methylene-5,6,7,8-tetrahydrofolate binding site.

Belongs to the thymidylate synthase family. Bacterial-type ThyA subfamily. In terms of assembly, homodimer.

The protein localises to the cytoplasm. The catalysed reaction is dUMP + (6R)-5,10-methylene-5,6,7,8-tetrahydrofolate = 7,8-dihydrofolate + dTMP. It functions in the pathway pyrimidine metabolism; dTTP biosynthesis. Catalyzes the reductive methylation of 2'-deoxyuridine-5'-monophosphate (dUMP) to 2'-deoxythymidine-5'-monophosphate (dTMP) while utilizing 5,10-methylenetetrahydrofolate (mTHF) as the methyl donor and reductant in the reaction, yielding dihydrofolate (DHF) as a by-product. This enzymatic reaction provides an intracellular de novo source of dTMP, an essential precursor for DNA biosynthesis. The chain is Thymidylate synthase from Vibrio vulnificus (strain YJ016).